A 700-amino-acid polypeptide reads, in one-letter code: Suprabasin (700 aa).

Positions 1-23 (MYLVSLLSSCCLLVLLGTLPARA) are cleaved as a signal peptide. Disordered stretches follow at residues 133–158 (QGGS…VANK), 183–258 (HAFG…VADK), and 283–391 (HAFG…GAHH). Positions 488–546 (KEAEKVAHGVQNGVNQAQKEAEKVAHGVQNGVNQAQKEAEKVAHGVQNGVNQAQKEAEK) form a coiled coil. Positions 641 to 654 (GVNQPSKEANQLLN) are enriched in polar residues. Residues 641–669 (GVNQPSKEANQLLNGSHQGQGGYGGQHGG) form a disordered region. Residues 658-668 (QGQGGYGGQHG) show a composition bias toward gly residues.

Detected in epidermis, in suprabasal keratinocytes. Detected in suprabasal layers of embryonic epidermis and in stratified layers of embryonic tongue and palate. Detected in adult stomach.

The protein localises to the secreted. This chain is Suprabasin (Sbsn), found in Mus musculus (Mouse).